Reading from the N-terminus, the 105-residue chain is Class I hydrophobin 1 (105 aa).

A signal peptide spans 1 to 18; sequence MAFIKSLLIASVAAVAFA. Disulfide bonds link C42–C83, C50–C76, C51–C62, and C84–C100.

Belongs to the fungal hydrophobin family. Self-assembles to form functional amyloid fibrils called rodlets. Self-assembly into fibrillar rodlets occurs spontaneously at hydrophobic:hydrophilic interfaces and the rodlets further associate laterally to form amphipathic monolayers.

It localises to the secreted. The protein localises to the cell wall. Its function is as follows. Aerial growth, conidiation, and dispersal of filamentous fungi in the environment rely upon a capability of their secreting small amphipathic proteins called hydrophobins (HPBs) with low sequence identity. Class I can self-assemble into an outermost layer of rodlet bundles on aerial cell surfaces, conferring cellular hydrophobicity that supports fungal growth, development and dispersal; whereas Class II form highly ordered films at water-air interfaces through intermolecular interactions but contribute nothing to the rodlet structure. This is Class I hydrophobin 1 from Davidiella tassiana (Mycosphaerella tassiana).